A 967-amino-acid chain; its full sequence is MTTIVAPPIKSITSIDNDDNVDGVIEKSVKKPVSLTFDQIIDRFYKHILTWDASDLSPKEKELKPVKVSFNNEEDYITTYEPLLFEECRAQLERSIEEGEKDDTSEPTLSRVRYISEVNDFLVVGLVMAENVNIFQFHDNDLIMISLHHPLIVFGMDEDEEMTDDEDTAPTSAATHVGAPTKSTTTTTTTTTTTTTTTTTATTNIIDDPNKTTEDIKKKKKVIPPSKTPITEQNRTLHLIGTVEHLDNGGIKVKFYVKGIKGDRARQVSLLLRYEIDWWTTKLCNLSTLQREFAALYQCSQSNFMKTLMMRDDDGEDGIVMKIPPLLHDQFSSTYNDSQLNALTSALEGNAITLIQGPPGTGKTHVILGLISVLLHSTIVPKVKSGGNNLGDHLLKDRELSMAEKRDLWNISQPWFNKEFPHIRDNYELIDYDFEERDQKRKRDLWRKLRDTGSVKGGSTKRRILLCAPSNGAVDEIVSRLIRDGLLNADGRKYNPNLVRVGPGSHSDVESVSLDYMVRCRQQLMNSNSAIPSSSASTAAATSGSSRSTQDTSSIRTLVLDEADIVATTLSFSGASLLTKMAGGFDIVIIDEAAQAVETSTLIPIQHGCKKVVLVGDPKQLPATIISPLAIKYKYDQSLFQRLQEKNSPHMLTTQYRMHSLIRAFPSRHFYQDLLLDGPNIPSRATHYHSNPFFGPLVFYDLSWSTETKPGGGSVFNEHECKMAMYLFQLFTKVYPDEDFASRIGIISPYRQQVLALREIFKNYPGISIDTVDGFQGREREIIIFSCVRAPVEEGAGIGFLSDVRRMNVALTRPRSSLLILGNTKALSINKDWNELIQHTQNNQQLIPVTKDQPLEIIIPTFTTRELFTELSEKGQQIVIPKPRTEEEINLQKQKDIEKRKKQHKRQKQKSKENDKKKQLKKRKELNNNDNNNNNKESSNKEVQEITNAEVVKDTEINNTKRARTRR.

Positions glutamate 161 to threonine 192 are disordered. Glycine 357 to threonine 364 is a binding site for ATP. Disordered regions lie at residues serine 529–serine 553 and glutamine 892–arginine 967. The stretch at asparagine 890–alanine 949 forms a coiled coil. Residues arginine 900–glutamine 909 show a composition bias toward basic residues. A compositionally biased stretch (low complexity) spans asparagine 928–glutamate 937.

Belongs to the DNA2/NAM7 helicase family.

It localises to the nucleus. In Dictyostelium discoideum (Social amoeba), this protein is Probable helicase DDB_G0274399.